Reading from the N-terminus, the 28-residue chain is Short cationic peptide-1c (28 aa).

Glu28 is subject to Glutamic acid 1-amide.

As to expression, expressed by the venom gland.

It is found in the secreted. This is Short cationic peptide-1c from Cupiennius salei (American wandering spider).